The following is a 387-amino-acid chain: EARP-interacting protein homolog (387 aa).

WD repeat units follow at residues 132-172 (TAHG…SKAV), 182-222 (KGQL…QIYC), 226-266 (AHGQ…DPVK), 270-310 (EHSH…SEPF), and 345-385 (EHED…KYHI).

Belongs to the WD repeat EIPR1 family.

The polypeptide is EARP-interacting protein homolog (Gekko japonicus (Schlegel's Japanese gecko)).